A 217-amino-acid chain; its full sequence is Eukaryotic translation initiation factor 4E (217 aa).

Over residues 1–11 the composition is skewed to low complexity; it reads MATVEPETTPT. Positions 1-27 are disordered; it reads MATVEPETTPTTNPPPAEEEKTESNQE. At Ala-2 the chain carries N-acetylalanine. Thr-22 carries the post-translational modification Phosphothreonine. The EIF4EBP1/2/3 binding stretch occupies residues 37–40; it reads HPLQ. 56-57 is a binding site for mRNA; that stretch reads WQ. The tract at residues 73 to 77 is EIF4EBP1/2/3 binding; that stretch reads WALYN. MRNA is bound at residue 102 to 103; it reads WE. Residues 132 to 139 are EIF4EBP1/2/3 binding; that stretch reads ETLLCLIG. Residues 157 to 162 and 205 to 207 each bind mRNA; these read RAKGDK and TKS. Position 209 is a phosphoserine; by PKC and MKNK2 (Ser-209).

The protein belongs to the eukaryotic initiation factor 4E family. EIF4F is a multi-subunit complex, the composition of which varies with external and internal environmental conditions. It is composed of at least EIF4A, EIF4E and EIF4G1/EIF4G3. EIF4E is also known to interact with other partners. Interacts with EIF4ENIF1/4E-T; promotes recruitment to P-bodies and import into the nucleus. Hypophosphorylated EIF4EBP1, EIF4EBP2 and EIF4EBP3 compete with EIF4G1/EIF4G3 to interact with EIF4E; insulin stimulated MAP-kinase (MAPK1 and MAPK3) phosphorylation of EIF4EBP1 causes dissociation of the complex allowing EIF4G1/EIF4G3 to bind and consequent initiation of translation. Interacts mutually exclusive with EIF4A1 or EIF4A2. Interacts with NGDN and PIWIL2. Component of the CYFIP1-EIF4E-FMR1 complex composed of CYFIP, EIF4E and FMR1. Interacts directly with CYFIP1. Interacts with CLOCK. Binds to MKNK2 in nucleus. Interacts with LIMD1, WTIP and AJUBA. Interacts with APOBEC3G in an RNA-dependent manner. Interacts with LARP1. Interacts with METTL3. Interacts with RBM24; this interaction prevents EIF4E from binding to p53/TP53 mRNA and inhibits the assembly of translation initiation complex. Interacts with DDX3X; interaction is direct and in an RNA-independent manner; this interaction enhances EIF4E cap-binding ability and is required for the repression of cap-dependent translation and the increase of IRES-mediated translation. DDX3X competes with EIF4G1 for interaction with EIF4E. Interacts with EIF4G1; which in a mutual exclusive interaction associates either with EIF1 or with EIF4E on a common binding site. Interacts with BTG4 and CNOT7. Interacts with LRPPRC (via N-terminus); the interaction promotes association of EIF4E with 4ESE-containing mRNAs. Interacts with mRNA cleavage enzyme CPSF3 and its cofactor CPSF1. Interacts (via RING-type zinc finger) with PML; the interaction results in conformational changes of both interacting proteins and reduces EIF4E affinity for the 5' m7G cap of mRNA, thus reducing EIF4E-mediated mRNA nuclear export. Interacts with homeobox protein HHEX/PRH; the interaction inhibits EIF4E-mediated mRNA nuclear export. Interacts with homeobox protein HOXA9; the interaction positively regulates EIF4E-mediated mRNA nuclear export. Interacts with homeobox protein EMX2. In terms of assembly, (Microbial infection) Interacts with murine norovirus viral genome-linked protein; this interaction plays a role in translation of viral proteins. Post-translationally, phosphorylation increases the ability of the protein to bind to mRNA caps and to form the eIF4F complex. Phosphorylation also enhances its mRNA transport function. Phosphorylation at Ser-209 is not essential for protein synthesis.

The protein resides in the cytoplasm. It localises to the P-body. Its subcellular location is the stress granule. The protein localises to the nucleus. It is found in the nucleus speckle. The protein resides in the nuclear body. Its function is as follows. Acts in the cytoplasm to initiate and regulate protein synthesis and is required in the nucleus for export of a subset of mRNAs from the nucleus to the cytoplasm which promotes processes such as RNA capping, processing and splicing. Component of the protein complex eIF4F, which is involved in the recognition of the mRNA cap, ATP-dependent unwinding of 5'-terminal secondary structure and recruitment of mRNA to the ribosome. This protein recognizes and binds the 7-methylguanosine (m7G)-containing mRNA cap during an early step in the initiation of protein synthesis and facilitates ribosome binding by inducing the unwinding of the mRNAs secondary structures. Together with EIF4G1, antagonizes the scanning promoted by EIF1-EIF4G1 and is required for TISU translation, a process where the TISU element recognition makes scanning unnecessary. In addition to its role in translation initiation, also acts as a regulator of translation and stability in the cytoplasm. Component of the CYFIP1-EIF4E-FMR1 complex which binds to the mRNA cap and mediates translational repression: in the complex, EIF4E mediates the binding to the mRNA cap. Component of a multiprotein complex that sequesters and represses translation of proneurogenic factors during neurogenesis. In P-bodies, component of a complex that mediates the storage of translationally inactive mRNAs in the cytoplasm and prevents their degradation. May play an important role in spermatogenesis through translational regulation of stage-specific mRNAs during germ cell development. As well as its roles in translation, also involved in mRNA nucleocytoplasmic transport. Its role in mRNA export from the nucleus to the cytoplasm relies on its ability to bind the m7G cap of RNAs and on the presence of the 50-nucleotide EIF4E sensitivity element (4ESE) in the 3'UTR of sensitive transcripts. Interaction with the 4ESE is mediated by LRPPRC which binds simultaneously to both EIF4E and the 4ESE, thereby acting as a platform for assembly for the RNA export complex. EIF4E-dependent mRNA export is independent of ongoing protein or RNA synthesis and is also NFX1-independent but is XPO1-dependent with LRPPRC interacting with XPO1 to form an EIF4E-dependent mRNA export complex. Alters the composition of the cytoplasmic face of the nuclear pore to promote RNA export by reducing RANBP2 expression, relocalizing nucleoporin NUP214 and increasing expression of RANBP1 and RNA export factors DDX19 and GLE1. Promotes the nuclear export of cyclin CCND1 mRNA. Promotes the nuclear export of NOS2/iNOS mRNA. Promotes the nuclear export of MDM2 mRNA. Also promotes the export of additional mRNAs, including others involved in the cell cycle. In the nucleus, binds to capped splice factor-encoding mRNAs and stimulates their nuclear export to enhance splice factor production by increasing their cytoplasmic availability to the translation machinery. May also regulate splicing through interaction with the spliceosome in an RNA and m7G cap-dependent manner. Also binds to some pre-mRNAs and may play a role in their recruitment to the spliceosome. Promotes steady-state capping of a subset of coding and non-coding RNAs by mediating nuclear export of capping machinery mRNAs including RNMT, RNGTT and RAMAC to enhance their translation. Stimulates mRNA 3'-end processing by promoting the expression of several core cleavage complex factors required for mRNA cleavage and polyadenylation, and may also have a direct effect through its interaction with the CPSF3 cleavage enzyme. Rescues cells from apoptosis by promoting activation of serine/threonine-protein kinase AKT1 through mRNA export of NBS1 which potentiates AKT1 phosphorylation and also through mRNA export of AKT1 effectors, allowing for increased production of these proteins. The protein is Eukaryotic translation initiation factor 4E of Mus musculus (Mouse).